A 160-amino-acid chain; its full sequence is SsrA-binding protein (160 aa).

Positions 138–148 are enriched in basic and acidic residues; the sequence is KRDDIKDREWQ. Positions 138–160 are disordered; the sequence is KRDDIKDREWQTAKSRIMKHANR.

The protein belongs to the SmpB family.

The protein resides in the cytoplasm. Functionally, required for rescue of stalled ribosomes mediated by trans-translation. Binds to transfer-messenger RNA (tmRNA), required for stable association of tmRNA with ribosomes. tmRNA and SmpB together mimic tRNA shape, replacing the anticodon stem-loop with SmpB. tmRNA is encoded by the ssrA gene; the 2 termini fold to resemble tRNA(Ala) and it encodes a 'tag peptide', a short internal open reading frame. During trans-translation Ala-aminoacylated tmRNA acts like a tRNA, entering the A-site of stalled ribosomes, displacing the stalled mRNA. The ribosome then switches to translate the ORF on the tmRNA; the nascent peptide is terminated with the 'tag peptide' encoded by the tmRNA and targeted for degradation. The ribosome is freed to recommence translation, which seems to be the essential function of trans-translation. In Serratia proteamaculans (strain 568), this protein is SsrA-binding protein.